Consider the following 357-residue polypeptide: Fructose-bisphosphate aldolase, cytoplasmic isozyme 1 (357 aa).

Residues Arg52 and Lys142 each coordinate substrate. The active-site Proton acceptor is the Glu183. The Schiff-base intermediate with dihydroxyacetone-P role is filled by Lys225.

This sequence belongs to the class I fructose-bisphosphate aldolase family.

It localises to the cytoplasm. The enzyme catalyses beta-D-fructose 1,6-bisphosphate = D-glyceraldehyde 3-phosphate + dihydroxyacetone phosphate. It functions in the pathway carbohydrate degradation; glycolysis; D-glyceraldehyde 3-phosphate and glycerone phosphate from D-glucose: step 4/4. This is Fructose-bisphosphate aldolase, cytoplasmic isozyme 1 from Pisum sativum (Garden pea).